The sequence spans 451 residues: UPF0210 protein LMHCC_2097 (451 aa).

It belongs to the UPF0210 family. In terms of assembly, homodimer.

This Listeria monocytogenes serotype 4a (strain HCC23) protein is UPF0210 protein LMHCC_2097.